The chain runs to 63 residues: uncharacterized protein (63 aa).

The next 2 membrane-spanning stretches (helical) occupy residues 3 to 23 (VFLI…VYYI) and 42 to 62 (ALVC…TKLL).

The protein localises to the cell membrane. This is an uncharacterized protein from Bacillus subtilis (strain 168).